We begin with the raw amino-acid sequence, 133 residues long: Sigma factor-binding protein Crl (133 aa).

The interval 99 to 122 (TLDDFYVKLTKFVKEDCQLDLQAS) is essential for activity.

Belongs to the Crl family.

The protein resides in the cytoplasm. Binds to the sigma-S subunit of RNA polymerase, activating expression of sigma-S-regulated genes. Stimulates RNA polymerase holoenzyme formation and may bind to several other sigma factors, such as sigma-70 and sigma-32. This is Sigma factor-binding protein Crl from Photobacterium profundum (strain SS9).